We begin with the raw amino-acid sequence, 122 residues long: Large ribosomal subunit protein uL14 (122 aa).

Belongs to the universal ribosomal protein uL14 family. As to quaternary structure, part of the 50S ribosomal subunit. Forms a cluster with proteins L3 and L19. In the 70S ribosome, L14 and L19 interact and together make contacts with the 16S rRNA in bridges B5 and B8.

Functionally, binds to 23S rRNA. Forms part of two intersubunit bridges in the 70S ribosome. In Rhodococcus erythropolis (strain PR4 / NBRC 100887), this protein is Large ribosomal subunit protein uL14.